The chain runs to 122 residues: Flagellar hook-basal body complex protein FliE (122 aa).

The protein belongs to the FliE family.

The protein resides in the bacterial flagellum basal body. This is Flagellar hook-basal body complex protein FliE from Marinobacter nauticus (strain ATCC 700491 / DSM 11845 / VT8) (Marinobacter aquaeolei).